A 505-amino-acid chain; its full sequence is Lysine--tRNA ligase (505 aa).

Mg(2+) contacts are provided by Glu-415 and Glu-422.

Belongs to the class-II aminoacyl-tRNA synthetase family. Homodimer. It depends on Mg(2+) as a cofactor.

Its subcellular location is the cytoplasm. It catalyses the reaction tRNA(Lys) + L-lysine + ATP = L-lysyl-tRNA(Lys) + AMP + diphosphate. The sequence is that of Lysine--tRNA ligase from Shigella dysenteriae serotype 1 (strain Sd197).